A 438-amino-acid chain; its full sequence is Transmembrane protein 184C (438 aa).

7 helical membrane passes run 17 to 37, 48 to 68, 86 to 106, 179 to 199, 212 to 232, 254 to 274, and 287 to 307; these read LVAV…VWEL, AWFI…WVIL, ILWM…YPGI, YTVV…LGIY, YLVI…LLFY, VVFV…VGVI, and AVAT…AAIA. The interval 358–438 is disordered; it reads PRKKLFPEDQ…KEPSDKSVDS (81 aa). 2 stretches are compositionally biased toward low complexity: residues 374 to 390 and 404 to 413; these read SLLS…ASSM and TVTPQTTPTT. Residue S422 is modified to Phosphoserine. The segment covering 425–438 has biased composition (basic and acidic residues); that stretch reads IGEKKEPSDKSVDS.

This sequence belongs to the TMEM184 family.

The protein resides in the membrane. Possible tumor suppressor which may play a role in cell growth. The sequence is that of Transmembrane protein 184C (TMEM184C) from Pongo abelii (Sumatran orangutan).